We begin with the raw amino-acid sequence, 604 residues long: Terpenoid synthase 30 (604 aa).

Residues Asn-356, Asp-360, Asn-500, Thr-504, and Glu-508 each coordinate Mg(2+). Positions 356–360 (NDVCD) match the DDXXD motif; degenerate motif.

It belongs to the terpene synthase family. Tpsa subfamily. Mg(2+) serves as cofactor. Requires Mn(2+) as cofactor.

Its subcellular location is the cytoplasm. Its pathway is secondary metabolite biosynthesis; terpenoid biosynthesis. Its function is as follows. Involved in terpene biosynthesis in roots. Possesses sesquiterpene (C15) synthase activity and diterpene (C20) synthase activity in vitro. The polypeptide is Terpenoid synthase 30 (Arabidopsis thaliana (Mouse-ear cress)).